The primary structure comprises 323 residues: Putative gluconeogenesis factor (323 aa).

The protein belongs to the gluconeogenesis factor family.

The protein localises to the cytoplasm. Required for morphogenesis under gluconeogenic growth conditions. The sequence is that of Putative gluconeogenesis factor from Thermoanaerobacterium thermosulfurigenes (Clostridium thermosulfurogenes).